A 170-amino-acid chain; its full sequence is Ureidoglycolate lyase 1 (170 aa).

The protein belongs to the ureidoglycolate lyase family. As to quaternary structure, homodimer. Ni(2+) is required as a cofactor.

The enzyme catalyses (S)-ureidoglycolate = urea + glyoxylate. The protein operates within nitrogen metabolism; (S)-allantoin degradation. In terms of biological role, catalyzes the catabolism of the allantoin degradation intermediate (S)-ureidoglycolate, generating urea and glyoxylate. Involved in the utilization of allantoin as nitrogen source. The chain is Ureidoglycolate lyase 1 from Rhizobium meliloti (strain 1021) (Ensifer meliloti).